We begin with the raw amino-acid sequence, 138 residues long: Small ribosomal subunit protein uS11c (138 aa).

The tract at residues 1–24 (MTKPIPRIGSRKNGRISSRKNGRR) is disordered. Residues 9–24 (GSRKNGRISSRKNGRR) show a composition bias toward basic residues.

This sequence belongs to the universal ribosomal protein uS11 family. In terms of assembly, part of the 30S ribosomal subunit.

The protein resides in the plastid. The protein localises to the chloroplast. This is Small ribosomal subunit protein uS11c from Chloranthus spicatus (Chulantree).